The following is a 306-amino-acid chain: Recombination-associated protein RdgC (306 aa).

The protein belongs to the RdgC family.

The protein localises to the cytoplasm. It is found in the nucleoid. In terms of biological role, may be involved in recombination. In Pseudomonas putida (strain ATCC 47054 / DSM 6125 / CFBP 8728 / NCIMB 11950 / KT2440), this protein is Recombination-associated protein RdgC.